A 165-amino-acid polypeptide reads, in one-letter code: Regulator of sigma D (165 aa).

It belongs to the Rsd/AlgQ family. Interacts with RpoD.

The protein resides in the cytoplasm. In terms of biological role, binds RpoD and negatively regulates RpoD-mediated transcription activation by preventing the interaction between the primary sigma factor RpoD with the catalytic core of the RNA polymerase and with promoter DNA. May be involved in replacement of the RNA polymerase sigma subunit from RpoD to RpoS during the transition from exponential growth to the stationary phase. In Enterobacter sp. (strain 638), this protein is Regulator of sigma D.